The chain runs to 116 residues: Methionine-R-sulfoxide reductase B1 (116 aa).

The MsrB domain occupies 1–106 (MSFCSFFGGE…FSSSLKFIPK (106 aa)). Cysteine 23, cysteine 26, cysteine 71, and cysteine 74 together coordinate Zn(2+). The active-site Nucleophile is the selenocysteine 95. Selenocysteine 95 is a non-standard amino acid (selenocysteine).

Belongs to the MsrB Met sulfoxide reductase family. It depends on Zn(2+) as a cofactor. Post-translationally, truncated MSRB1/SEPX1 proteins produced by failed UGA/Sec decoding are ubiquitinated by the CRL2(FEM1C) E3 ubiquitin-protein ligase complex.

The protein localises to the cytoplasm. It localises to the nucleus. Its subcellular location is the cytoskeleton. It carries out the reaction L-methionyl-[protein] + [thioredoxin]-disulfide + H2O = L-methionyl-(R)-S-oxide-[protein] + [thioredoxin]-dithiol. The catalysed reaction is [thioredoxin]-disulfide + L-methionine + H2O = L-methionine (R)-S-oxide + [thioredoxin]-dithiol. Methionine-sulfoxide reductase that specifically reduces methionine (R)-sulfoxide back to methionine. While in many cases, methionine oxidation is the result of random oxidation following oxidative stress, methionine oxidation is also a post-translational modification that takes place on specific residue. Acts as a regulator of actin assembly by reducing methionine (R)-sulfoxide mediated by MICALs (MICAL1, MICAL2 or MICAL3) on actin, thereby promoting filament repolymerization. Plays a role in innate immunity by reducing oxidized actin, leading to actin repolymerization in macrophages. The chain is Methionine-R-sulfoxide reductase B1 (Msrb1) from Rattus norvegicus (Rat).